Here is a 764-residue protein sequence, read N- to C-terminus: 5-methyltetrahydropteroyltriglutamate--homocysteine methyltransferase (764 aa).

5-methyltetrahydropteroyltri-L-glutamate-binding positions include 16 to 19 and Lys-117; that span reads RELK. L-homocysteine-binding positions include 442 to 444 and Glu-495; that span reads IGS. L-methionine-binding positions include 442–444 and Glu-495; that span reads IGS. 5-methyltetrahydropteroyltri-L-glutamate contacts are provided by residues 526-527 and Trp-572; that span reads RC. An L-homocysteine-binding site is contributed by Asp-610. L-methionine is bound at residue Asp-610. Residue Glu-616 coordinates 5-methyltetrahydropteroyltri-L-glutamate. The Zn(2+) site is built by His-652, Cys-654, and Glu-676. The active-site Proton donor is the His-705. Cys-737 is a Zn(2+) binding site.

This sequence belongs to the vitamin-B12 independent methionine synthase family. Requires Zn(2+) as cofactor.

It carries out the reaction 5-methyltetrahydropteroyltri-L-glutamate + L-homocysteine = tetrahydropteroyltri-L-glutamate + L-methionine. The protein operates within amino-acid biosynthesis; L-methionine biosynthesis via de novo pathway; L-methionine from L-homocysteine (MetE route): step 1/1. Its function is as follows. Catalyzes the transfer of a methyl group from 5-methyltetrahydrofolate to homocysteine resulting in methionine formation. The chain is 5-methyltetrahydropteroyltriglutamate--homocysteine methyltransferase from Bordetella bronchiseptica (strain ATCC BAA-588 / NCTC 13252 / RB50) (Alcaligenes bronchisepticus).